The following is a 272-amino-acid chain: Hydroxyethylthiazole kinase (272 aa).

Substrate is bound at residue M44. 2 residues coordinate ATP: K119 and T172. G199 serves as a coordination point for substrate.

This sequence belongs to the Thz kinase family. The cofactor is Mg(2+).

The catalysed reaction is 5-(2-hydroxyethyl)-4-methylthiazole + ATP = 4-methyl-5-(2-phosphooxyethyl)-thiazole + ADP + H(+). It participates in cofactor biosynthesis; thiamine diphosphate biosynthesis; 4-methyl-5-(2-phosphoethyl)-thiazole from 5-(2-hydroxyethyl)-4-methylthiazole: step 1/1. Its function is as follows. Catalyzes the phosphorylation of the hydroxyl group of 4-methyl-5-beta-hydroxyethylthiazole (THZ). This chain is Hydroxyethylthiazole kinase, found in Enterococcus faecalis (strain ATCC 700802 / V583).